Consider the following 69-residue polypeptide: Large ribosomal subunit protein bL31 (69 aa).

Zn(2+)-binding residues include C16, C18, C38, and C41.

This sequence belongs to the bacterial ribosomal protein bL31 family. Type A subfamily. In terms of assembly, part of the 50S ribosomal subunit. It depends on Zn(2+) as a cofactor.

Functionally, binds the 23S rRNA. In Cutibacterium acnes (strain DSM 16379 / KPA171202) (Propionibacterium acnes), this protein is Large ribosomal subunit protein bL31.